The primary structure comprises 574 residues: Proline--tRNA ligase (574 aa).

It belongs to the class-II aminoacyl-tRNA synthetase family. ProS type 1 subfamily. Homodimer.

It is found in the cytoplasm. It catalyses the reaction tRNA(Pro) + L-proline + ATP = L-prolyl-tRNA(Pro) + AMP + diphosphate. Functionally, catalyzes the attachment of proline to tRNA(Pro) in a two-step reaction: proline is first activated by ATP to form Pro-AMP and then transferred to the acceptor end of tRNA(Pro). As ProRS can inadvertently accommodate and process non-cognate amino acids such as alanine and cysteine, to avoid such errors it has two additional distinct editing activities against alanine. One activity is designated as 'pretransfer' editing and involves the tRNA(Pro)-independent hydrolysis of activated Ala-AMP. The other activity is designated 'posttransfer' editing and involves deacylation of mischarged Ala-tRNA(Pro). The misacylated Cys-tRNA(Pro) is not edited by ProRS. This is Proline--tRNA ligase from Anaeromyxobacter sp. (strain K).